A 247-amino-acid polypeptide reads, in one-letter code: E3 ubiquitin-protein ligase RNF182 (247 aa).

The segment at 20–68 (CKICYNRYNLKQRKPKVLECCHRVCAKCLYKIIDFGDSPQGVIVCPFCR) adopts an RING-type zinc-finger fold. The next 2 helical transmembrane spans lie at 184–204 (VLVW…IYLL) and 211–231 (LGVV…VYGF).

As to quaternary structure, interacts with ATP6V0C.

It is found in the membrane. It localises to the cytoplasm. The catalysed reaction is S-ubiquitinyl-[E2 ubiquitin-conjugating enzyme]-L-cysteine + [acceptor protein]-L-lysine = [E2 ubiquitin-conjugating enzyme]-L-cysteine + N(6)-ubiquitinyl-[acceptor protein]-L-lysine.. It participates in protein modification; protein ubiquitination. Functionally, E3 ubiquitin-protein ligase that mediates the ubiquitination of ATP6V0C and targets it to degradation via the ubiquitin-proteasome pathway. Also plays a role in the inhibition of TLR-triggered innate immune response by mediating 'Lys'-48-linked ubiquitination and subsequent degradation of NF-kappa-B component RELA. In Ailuropoda melanoleuca (Giant panda), this protein is E3 ubiquitin-protein ligase RNF182 (RNF182).